Consider the following 373-residue polypeptide: mRNA export factor rae-1 (373 aa).

Residue Met-1 is modified to N-acetylmethionine. WD repeat units lie at residues 40–82, 87–126, 128–169, and 276–315; these read APED…TFEG, NIPAPILDIAWIEDSSKIFIACADKEARLWDLASNQVAVV, THDG…NQTQ, and QEIYAVNDICFHPQHGTLVTIGSDGRYSMWDKDARTKLKT.

This sequence belongs to the WD repeat rae1 family. In terms of assembly, the nuclear pore complex (NPC) constitutes the exclusive means of nucleocytoplasmic transport. NPCs allow the passive diffusion of ions and small molecules and the active, nuclear transport receptor-mediated bidirectional transport of macromolecules such as proteins, RNAs, ribonucleoparticles (RNPs), and ribosomal subunits across the nuclear envelope. Interacts with rpm-1. In terms of tissue distribution, expressed along the ventral and dorsal nerve cords.

It localises to the nucleus. Its subcellular location is the nuclear pore complex. It is found in the cell projection. The protein localises to the axon. The protein resides in the synapse. Functionally, functions as a component of the nuclear pore complex (NPC). NPC components, collectively referred to as nucleoporins (NUPs), can play the role of both NPC structural components and of docking or interaction partners for transiently associated nuclear transport factors. It is specifically important for nuclear mRNA export. Has a role in neuronal development, where it acts downstream of rpm-1 to control axon termination and synapse formation in anterior lateral microtubule (ALM) and posterior lateral microtubule (PLM) mechanosensory neurons. In Caenorhabditis elegans, this protein is mRNA export factor rae-1.